Here is a 214-residue protein sequence, read N- to C-terminus: Putative pyrophosphatase PpaX (214 aa).

The active-site Nucleophile is the Asp8.

The protein belongs to the HAD-like hydrolase superfamily. PpaX family. The cofactor is Mg(2+).

The catalysed reaction is diphosphate + H2O = 2 phosphate + H(+). This Clostridium perfringens (strain 13 / Type A) protein is Putative pyrophosphatase PpaX.